The chain runs to 227 residues: Enolase-phosphatase E1 (227 aa).

Asp12 and Glu14 together coordinate Mg(2+). Substrate is bound by residues 118–119 (SS) and Lys159. Residue Asp186 coordinates Mg(2+).

It belongs to the HAD-like hydrolase superfamily. MasA/MtnC family. Monomer. It depends on Mg(2+) as a cofactor.

The protein resides in the cytoplasm. The protein localises to the nucleus. The catalysed reaction is 5-methylsulfanyl-2,3-dioxopentyl phosphate + H2O = 1,2-dihydroxy-5-(methylsulfanyl)pent-1-en-3-one + phosphate. It functions in the pathway amino-acid biosynthesis; L-methionine biosynthesis via salvage pathway; L-methionine from S-methyl-5-thio-alpha-D-ribose 1-phosphate: step 3/6. It participates in amino-acid biosynthesis; L-methionine biosynthesis via salvage pathway; L-methionine from S-methyl-5-thio-alpha-D-ribose 1-phosphate: step 4/6. Bifunctional enzyme that catalyzes the enolization of 2,3-diketo-5-methylthiopentyl-1-phosphate (DK-MTP-1-P) into the intermediate 2-hydroxy-3-keto-5-methylthiopentenyl-1-phosphate (HK-MTPenyl-1-P), which is then dephosphorylated to form the acireductone 1,2-dihydroxy-3-keto-5-methylthiopentene (DHK-MTPene). This is Enolase-phosphatase E1 from Vanderwaltozyma polyspora (strain ATCC 22028 / DSM 70294 / BCRC 21397 / CBS 2163 / NBRC 10782 / NRRL Y-8283 / UCD 57-17) (Kluyveromyces polysporus).